The primary structure comprises 538 residues: Tryptophan 7-halogenase PrnA (538 aa).

Residues glycine 13, threonine 15, alanine 16, serine 39, isoleucine 42, isoleucine 45, glutamate 49, and alanine 50 each coordinate FAD. Lysine 79 is a catalytic residue. Lysine 79 serves as a coordination point for 7-chloro-L-tryptophan. The FAD site is built by valine 187 and leucine 337. Glutamate 346 lines the 7-chloro-L-tryptophan pocket. Glutamate 346 contacts L-tryptophan. 2 residues coordinate chloride: threonine 348 and glycine 349. Isoleucine 350 lines the FAD pocket. 4 residues coordinate 7-chloro-L-tryptophan: tyrosine 443, tyrosine 444, glutamate 450, and phenylalanine 454. Residues tyrosine 443, tyrosine 444, glutamate 450, and phenylalanine 454 each contribute to the L-tryptophan site.

The protein belongs to the flavin-dependent halogenase family. Bacterial tryptophan halogenase subfamily. In terms of assembly, homodimer.

The enzyme catalyses L-tryptophan + FADH2 + chloride + O2 = 7-chloro-L-tryptophan + FAD + 2 H2O. Its pathway is antibiotic biosynthesis. Functionally, involved in the biosynthesis of the antifungal antibiotic pyrrolnitrin. Catalyzes the chlorination of tryptophan (Trp) at C7 position to yield 7-chloro-L-tryptophan (7-CLT). The protein is Tryptophan 7-halogenase PrnA of Pseudomonas fluorescens.